The sequence spans 104 residues: Large ribosomal subunit protein bL21 (104 aa).

The protein belongs to the bacterial ribosomal protein bL21 family. In terms of assembly, part of the 50S ribosomal subunit. Contacts protein L20.

This protein binds to 23S rRNA in the presence of protein L20. The protein is Large ribosomal subunit protein bL21 of Tropheryma whipplei (strain TW08/27) (Whipple's bacillus).